Here is a 209-residue protein sequence, read N- to C-terminus: Thiamine-phosphate synthase (209 aa).

4-amino-2-methyl-5-(diphosphooxymethyl)pyrimidine contacts are provided by residues 36–40 (QYRDK) and asparagine 68. Mg(2+) contacts are provided by aspartate 69 and aspartate 87. Position 106 (threonine 106) interacts with 4-amino-2-methyl-5-(diphosphooxymethyl)pyrimidine. 133 to 135 (SST) provides a ligand contact to 2-[(2R,5Z)-2-carboxy-4-methylthiazol-5(2H)-ylidene]ethyl phosphate. Lysine 136 provides a ligand contact to 4-amino-2-methyl-5-(diphosphooxymethyl)pyrimidine. Glycine 163 is a 2-[(2R,5Z)-2-carboxy-4-methylthiazol-5(2H)-ylidene]ethyl phosphate binding site.

This sequence belongs to the thiamine-phosphate synthase family. It depends on Mg(2+) as a cofactor.

The catalysed reaction is 2-[(2R,5Z)-2-carboxy-4-methylthiazol-5(2H)-ylidene]ethyl phosphate + 4-amino-2-methyl-5-(diphosphooxymethyl)pyrimidine + 2 H(+) = thiamine phosphate + CO2 + diphosphate. It catalyses the reaction 2-(2-carboxy-4-methylthiazol-5-yl)ethyl phosphate + 4-amino-2-methyl-5-(diphosphooxymethyl)pyrimidine + 2 H(+) = thiamine phosphate + CO2 + diphosphate. It carries out the reaction 4-methyl-5-(2-phosphooxyethyl)-thiazole + 4-amino-2-methyl-5-(diphosphooxymethyl)pyrimidine + H(+) = thiamine phosphate + diphosphate. The protein operates within cofactor biosynthesis; thiamine diphosphate biosynthesis; thiamine phosphate from 4-amino-2-methyl-5-diphosphomethylpyrimidine and 4-methyl-5-(2-phosphoethyl)-thiazole: step 1/1. In terms of biological role, condenses 4-methyl-5-(beta-hydroxyethyl)thiazole monophosphate (THZ-P) and 2-methyl-4-amino-5-hydroxymethyl pyrimidine pyrophosphate (HMP-PP) to form thiamine monophosphate (TMP). The chain is Thiamine-phosphate synthase from Pseudomonas aeruginosa (strain UCBPP-PA14).